The primary structure comprises 905 residues: Protein translocase subunit SecA (905 aa).

Residues Gln89, 107–111, and Asp502 each bind ATP; that span reads GEGKT. 4 residues coordinate Zn(2+): Cys889, Cys891, Cys900, and His901.

The protein belongs to the SecA family. Monomer and homodimer. Part of the essential Sec protein translocation apparatus which comprises SecA, SecYEG and auxiliary proteins SecDF-YajC and YidC. Requires Zn(2+) as cofactor.

The protein resides in the cell inner membrane. It is found in the cytoplasm. It carries out the reaction ATP + H2O + cellular proteinSide 1 = ADP + phosphate + cellular proteinSide 2.. In terms of biological role, part of the Sec protein translocase complex. Interacts with the SecYEG preprotein conducting channel. Has a central role in coupling the hydrolysis of ATP to the transfer of proteins into and across the cell membrane, serving both as a receptor for the preprotein-SecB complex and as an ATP-driven molecular motor driving the stepwise translocation of polypeptide chains across the membrane. This Bartonella tribocorum (strain CIP 105476 / IBS 506) protein is Protein translocase subunit SecA.